The sequence spans 226 residues: ATP-dependent dethiobiotin synthetase BioD (226 aa).

An ATP-binding site is contributed by 14 to 19 (GIGKTF). Position 18 (threonine 18) interacts with Mg(2+). Residue lysine 39 is part of the active site. Serine 43 serves as a coordination point for substrate. Residues aspartate 56, 117–120 (EGVG), 177–178 (NT), 206–208 (PHI), and asparagine 213 contribute to the ATP site. Positions 56 and 117 each coordinate Mg(2+).

Belongs to the dethiobiotin synthetase family. In terms of assembly, homodimer. Mg(2+) is required as a cofactor.

Its subcellular location is the cytoplasm. The enzyme catalyses (7R,8S)-7,8-diammoniononanoate + CO2 + ATP = (4R,5S)-dethiobiotin + ADP + phosphate + 3 H(+). Its pathway is cofactor biosynthesis; biotin biosynthesis; biotin from 7,8-diaminononanoate: step 1/2. Functionally, catalyzes a mechanistically unusual reaction, the ATP-dependent insertion of CO2 between the N7 and N8 nitrogen atoms of 7,8-diaminopelargonic acid (DAPA, also called 7,8-diammoniononanoate) to form a ureido ring. This chain is ATP-dependent dethiobiotin synthetase BioD, found in Xylella fastidiosa (strain M12).